The sequence spans 75 residues: uncharacterized protein (75 aa).

Residues 44-64 (IINMIVIWAALIALFVKLYIL) traverse the membrane as a helical segment.

Its subcellular location is the host membrane. This is an uncharacterized protein from Ostreid herpesvirus 1 (isolate France) (OsHV-1).